Reading from the N-terminus, the 373-residue chain is Opsin Rh1 (373 aa).

Over 1–49 (MESFAVAAAQLGPHFAPLSNGSVVDKVTPDMAHLISPYWNQFPAMDPIW) the chain is Extracellular. The N-linked (GlcNAc...) asparagine glycan is linked to Asn20. The chain crosses the membrane as a helical span at residues 50-74 (AKILTAYMIMIGMISWCGNGVVIYI). At 75–86 (FATTKSLRTPAN) the chain is on the cytoplasmic side. Residues 87 to 112 (LLVINLAISDFGIMITNTPMMGINLY) form a helical membrane-spanning segment. At 113-126 (FETWVLGPMMCDIY) the chain is on the extracellular side. A disulfide bond links Cys123 and Cys200. Residues 127-146 (AGLGSAFGCSSIWSMCMISL) form a helical membrane-spanning segment. The Cytoplasmic segment spans residues 147 to 165 (DRYQVIVKGMAGRPMTIPL). The chain crosses the membrane as a helical span at residues 166–189 (ALGKIAYIWFMSSIWCLAPAFGWS). Residues 190 to 213 (RYVPEGNLTSCGIDYLERDWNPRS) lie on the Extracellular side of the membrane. An N-linked (GlcNAc...) asparagine glycan is attached at Asn196. The chain crosses the membrane as a helical span at residues 214 to 241 (YLIFYSIFVYYIPLFLICYSYWFIIAAV). Residues 242-276 (SAHEKAMREQAKKMNVKSLRSSEDAEKSAEGKLAK) are Cytoplasmic-facing. Residues 277 to 300 (VALVTITLWFMAWTPYLVINCMGL) traverse the membrane as a helical segment. At 301–307 (FKFEGLT) the chain is on the extracellular side. The chain crosses the membrane as a helical span at residues 308-332 (PLNTIWGACFAKSAACYNPIVYGIS). Residue Lys319 is modified to N6-(retinylidene)lysine. At 333-373 (HPKYRLALKEKCPCCVFGKVDDGKSSDAQSQATASEAESKA) the chain is on the cytoplasmic side. The interval 354–373 (DGKSSDAQSQATASEAESKA) is disordered. Residues 358–373 (SDAQSQATASEAESKA) are compositionally biased toward low complexity.

Belongs to the G-protein coupled receptor 1 family. Opsin subfamily. In terms of processing, phosphorylated on some or all of the serine and threonine residues present in the C-terminal region.

It localises to the cell projection. Its subcellular location is the rhabdomere membrane. Functionally, visual pigments are the light-absorbing molecules that mediate vision. They consist of an apoprotein, opsin, covalently linked to cis-retinal. The polypeptide is Opsin Rh1 (ninaE) (Drosophila melanogaster (Fruit fly)).